The following is an 862-amino-acid chain: Short transient receptor potential channel 7 (862 aa).

Positions Met-1–Gly-21 are disordered. Topologically, residues Met-1–Lys-351 are cytoplasmic. Basic residues predominate over residues Met-10–Gly-21. Thr-15 is modified (phosphothreonine; by PKG/PRKG1). 4 ANK repeats span residues Pro-42 to Phe-71, Met-77 to Val-106, Asp-108 to Gly-134, and His-163 to Arg-192. The helical transmembrane segment at Phe-352 to Ala-372 threads the bilayer. Topologically, residues Pro-373–Ser-383 are extracellular. Residues Pro-384–Val-404 form a helical membrane-spanning segment. Topologically, residues Asn-405–Glu-465 are cytoplasmic. Residues Tyr-466 to Phe-486 traverse the membrane as a helical segment. Residues Thr-487–Gln-537 are Extracellular-facing. Asn-514 carries N-linked (GlcNAc...) asparagine glycosylation. A helical membrane pass occupies residues Ile-538 to Ile-558. Topologically, residues Leu-559 to Lys-581 are cytoplasmic. A helical membrane pass occupies residues Phe-582 to Ser-602. Over Tyr-603–Val-651 the chain is Extracellular. The helical transmembrane segment at Leu-652–Ile-672 threads the bilayer. Over Asn-673–Ile-862 the chain is Cytoplasmic.

It belongs to the transient receptor (TC 1.A.4) family. STrpC subfamily. TRPC7 sub-subfamily. In terms of assembly, interacts with MX1 and RNF24. Interacts (via ANK-repeat domains) with PRKG1. Post-translationally, phosphorylation by PRKG1 at Thr-15 negatively regulates TRPC7 activity.

Its subcellular location is the cell membrane. It localises to the nucleus envelope. It carries out the reaction Ca(2+)(in) = Ca(2+)(out). In terms of biological role, forms a receptor-activated non-selective calcium permeant cation channel. Probably is operated by a phosphatidylinositol second messenger system activated by receptor tyrosine kinases or G-protein coupled receptors. Activated by diacylglycerol (DAG). May also be activated by intracellular calcium store depletion. The chain is Short transient receptor potential channel 7 (TRPC7) from Homo sapiens (Human).